Here is a 114-residue protein sequence, read N- to C-terminus: Large ribosomal subunit protein uL18 (114 aa).

Belongs to the universal ribosomal protein uL18 family. In terms of assembly, part of the 50S ribosomal subunit; part of the 5S rRNA/L5/L18/L25 subcomplex. Contacts the 5S and 23S rRNAs.

Its function is as follows. This is one of the proteins that bind and probably mediate the attachment of the 5S RNA into the large ribosomal subunit, where it forms part of the central protuberance. This chain is Large ribosomal subunit protein uL18, found in Aster yellows phytoplasma.